A 250-amino-acid polypeptide reads, in one-letter code: Tryptophan synthase alpha chain (250 aa).

Residues Glu-31 and Asp-42 each act as proton acceptor in the active site.

The protein belongs to the TrpA family. Tetramer of two alpha and two beta chains.

The enzyme catalyses (1S,2R)-1-C-(indol-3-yl)glycerol 3-phosphate + L-serine = D-glyceraldehyde 3-phosphate + L-tryptophan + H2O. The protein operates within amino-acid biosynthesis; L-tryptophan biosynthesis; L-tryptophan from chorismate: step 5/5. The alpha subunit is responsible for the aldol cleavage of indoleglycerol phosphate to indole and glyceraldehyde 3-phosphate. This chain is Tryptophan synthase alpha chain, found in Staphylococcus carnosus (strain TM300).